A 170-amino-acid polypeptide reads, in one-letter code: ATP synthase subunit b (170 aa).

A helical membrane pass occupies residues 20-42 (QLLAMLVLLALLKKFALGPLLNI).

Belongs to the ATPase B chain family. As to quaternary structure, F-type ATPases have 2 components, F(1) - the catalytic core - and F(0) - the membrane proton channel. F(1) has five subunits: alpha(3), beta(3), gamma(1), delta(1), epsilon(1). F(0) has three main subunits: a(1), b(2) and c(10-14). The alpha and beta chains form an alternating ring which encloses part of the gamma chain. F(1) is attached to F(0) by a central stalk formed by the gamma and epsilon chains, while a peripheral stalk is formed by the delta and b chains.

The protein resides in the cell membrane. In terms of biological role, f(1)F(0) ATP synthase produces ATP from ADP in the presence of a proton or sodium gradient. F-type ATPases consist of two structural domains, F(1) containing the extramembraneous catalytic core and F(0) containing the membrane proton channel, linked together by a central stalk and a peripheral stalk. During catalysis, ATP synthesis in the catalytic domain of F(1) is coupled via a rotary mechanism of the central stalk subunits to proton translocation. Component of the F(0) channel, it forms part of the peripheral stalk, linking F(1) to F(0). The polypeptide is ATP synthase subunit b (Bacillus velezensis (strain DSM 23117 / BGSC 10A6 / LMG 26770 / FZB42) (Bacillus amyloliquefaciens subsp. plantarum)).